Here is a 478-residue protein sequence, read N- to C-terminus: DNA-directed RNA polymerase subunit alpha (478 aa).

Residues 1–341 (MNKKIQDFFL…LDCMRLLNYE (341 aa)) form an alpha N-terminal domain (alpha-NTD) region. Residues 365-478 (RFYNSREDKT…KLGSRNEKNL (114 aa)) are alpha C-terminal domain (alpha-CTD).

Belongs to the RNA polymerase alpha chain family. In plastids the minimal PEP RNA polymerase catalytic core is composed of four subunits: alpha, beta, beta', and beta''. When a (nuclear-encoded) sigma factor is associated with the core the holoenzyme is formed, which can initiate transcription.

Its subcellular location is the plastid. The protein localises to the chloroplast. It carries out the reaction RNA(n) + a ribonucleoside 5'-triphosphate = RNA(n+1) + diphosphate. DNA-dependent RNA polymerase catalyzes the transcription of DNA into RNA using the four ribonucleoside triphosphates as substrates. The sequence is that of DNA-directed RNA polymerase subunit alpha (rpoA) from Tetradesmus obliquus (Green alga).